We begin with the raw amino-acid sequence, 551 residues long: Glucans biosynthesis protein D (551 aa).

The tat-type signal signal peptide spans 1 to 32 (MDRRRFIKGSMAMAAVCGTSGIASLFSQAAFA).

Belongs to the OpgD/OpgG family. Post-translationally, predicted to be exported by the Tat system. The position of the signal peptide cleavage has not been experimentally proven.

The protein localises to the periplasm. Its pathway is glycan metabolism; osmoregulated periplasmic glucan (OPG) biosynthesis. Probably involved in the control of the structural glucose backbone of osmoregulated periplasmic glucans (OPGs). The sequence is that of Glucans biosynthesis protein D from Shigella dysenteriae serotype 1 (strain Sd197).